We begin with the raw amino-acid sequence, 292 residues long: Golgi to ER traffic protein 2 (292 aa).

Residues 1-18 (MSELSAEEKRKLLRERRQ) show a composition bias toward basic and acidic residues. The interval 1–80 (MSELSAEEKR…TPLHDDPEVP (80 aa)) is disordered. Residues 1-158 (MSELSAEEKR…SQYHAYEQKQ (158 aa)) are Cytoplasmic-facing. Composition is skewed to polar residues over residues 29–47 (RLNNILSQGSSVKSSNVTS) and 55–71 (ATTTVMDLPSRETQSPT). A helical transmembrane segment spans residues 159 to 179 (WKARFLVVRWIIHTLNFVYHY). Topologically, residues 180–205 (IASGYKLSASPYAFVRAQAVDSHVRT) are lumenal. Residues 206–225 (FFTAFLTVEVAVISAYFLVM) traverse the membrane as a helical segment. Residues 226–268 (SQPKFKDFSRENLVSRILSMASAVVPAVGRYQPLVTRALVYWN) are Cytoplasmic-facing. A helical membrane pass occupies residues 269-289 (GASIFVGDLMLMVFYFGITSV). Topologically, residues 290–292 (LGN) are lumenal.

It belongs to the GET2 family. Component of the Golgi to ER traffic (GET) complex, which is composed of GET1, GET2 and GET3. Within the complex, GET1 and GET2 form a heterotetramer which is stabilized by phosphatidylinositol binding and which binds to the GET3 homodimer.

Its subcellular location is the endoplasmic reticulum membrane. The protein localises to the golgi apparatus membrane. Functionally, required for the post-translational delivery of tail-anchored (TA) proteins to the endoplasmic reticulum. Together with GET1, acts as a membrane receptor for soluble GET3, which recognizes and selectively binds the transmembrane domain of TA proteins in the cytosol. The GET complex cooperates with the HDEL receptor ERD2 to mediate the ATP-dependent retrieval of resident ER proteins that contain a C-terminal H-D-E-L retention signal from the Golgi to the ER. This chain is Golgi to ER traffic protein 2, found in Clavispora lusitaniae (strain ATCC 42720) (Yeast).